We begin with the raw amino-acid sequence, 434 residues long: Angio-associated migratory cell protein (434 aa).

The tract at residues 1 to 63 (MESESESGAA…EEEEEEGNEE (63 aa)) is disordered. A Phosphoserine modification is found at S20. The segment covering 39–62 (DPDDLAQEMEDVDFEEEEEEEGNE) has biased composition (acidic residues). WD repeat units follow at residues 89–129 (LHSA…LLFE), 132–171 (GHKD…EVWS), 173–212 (EAGD…KTFQ), 214–254 (PNCP…HVLK), 258–299 (GHQG…GVFR), 315–354 (SESN…LRHQ), 356–395 (QHQS…LLTD), and 398–433 (GHTA…QRPD).

In terms of tissue distribution, expressed in metastatic melanoma, liver, skin, kidney, heart, lung, lymph node, skeletal muscle and brain, and also in A2058 melanoma cells and activated T-cells (at protein level). Expressed in blood vessels. Strongly expressed in endothelial cells, cytotrophoblasts, and poorly differentiated. colon adenocarcinoma cells found in lymphatics.

It is found in the cell membrane. Its subcellular location is the cytoplasm. Its function is as follows. Plays a role in angiogenesis and cell migration. In smooth muscle cell migration, may act through the RhoA pathway. This chain is Angio-associated migratory cell protein (AAMP), found in Homo sapiens (Human).